The primary structure comprises 500 residues: NAD(P)H-quinone oxidoreductase chain 4, chloroplastic (500 aa).

A run of 15 helical transmembrane segments spans residues 4-24, 35-55, 87-107, 113-130, 134-154, 167-187, 211-231, 242-262, 272-292, 305-325, 330-350, 364-384, 386-406, 416-436, and 463-483; these read FPWL…IFFL, YTIF…CYHF, IGPI…AWPV, LFNF…GLFS, LLLF…LLSM, FILY…GIGL, IIFY…IPLH, HYST…YGLV, AHSI…IYAA, IAYS…SITD, GALL…FLAG, MGGI…FSMA, LALP…GIIT, ILIT…SLSM, and FLSI…DFIF.

It belongs to the complex I subunit 4 family.

It is found in the plastid. The protein localises to the chloroplast thylakoid membrane. It catalyses the reaction a plastoquinone + NADH + (n+1) H(+)(in) = a plastoquinol + NAD(+) + n H(+)(out). It carries out the reaction a plastoquinone + NADPH + (n+1) H(+)(in) = a plastoquinol + NADP(+) + n H(+)(out). This Coffea arabica (Arabian coffee) protein is NAD(P)H-quinone oxidoreductase chain 4, chloroplastic.